Reading from the N-terminus, the 95-residue chain is MSYLLTSALLFALGVYGVLTRRTAILVFLSIELMLNAANLSLVGFARAYGLDGQVAALMVIAVAAAEVAVGLGLIVAIFRHRESTAVDDLSELRG.

Transmembrane regions (helical) follow at residues 1-21, 25-45, and 59-79; these read MSYL…VLTR, ILVF…LVGF, and MVIA…VAIF.

This sequence belongs to the complex I subunit 4L family. As to quaternary structure, NDH-1 is composed of 15 different subunits, Nqo1 to Nqo15. The complex has a L-shaped structure, with the hydrophobic arm (subunits Nqo7, Nqo8 and Nqo10 to Nqo14) embedded in the membrane and the hydrophilic peripheral arm (subunits Nqo1 to Nqo6, Nqo9 and Nqo15) protruding into the bacterial cytoplasm. The hydrophilic domain contains all the redox centers.

It localises to the cell inner membrane. It catalyses the reaction a quinone + NADH + 5 H(+)(in) = a quinol + NAD(+) + 4 H(+)(out). In terms of biological role, NDH-1 shuttles electrons from NADH, via FMN and iron-sulfur (Fe-S) centers, to quinones in the respiratory chain. The immediate electron acceptor for the enzyme in this species is menaquinone. Couples the redox reaction to proton translocation (for every two electrons transferred, four hydrogen ions are translocated across the cytoplasmic membrane), and thus conserves the redox energy in a proton gradient required for the synthesis of ATP. The polypeptide is NADH-quinone oxidoreductase subunit 11 (nqo11) (Thermus thermophilus (strain ATCC 27634 / DSM 579 / HB8)).